Reading from the N-terminus, the 113-residue chain is Protein Asterix (113 aa).

A helical transmembrane segment spans residues 81-97; the sequence is IVSSFMLSVSAVVMSYL.

Belongs to the Asterix family.

It localises to the membrane. This Caenorhabditis elegans protein is Protein Asterix.